Here is a 335-residue protein sequence, read N- to C-terminus: Aspartate carbamoyltransferase catalytic subunit (335 aa).

Arginine 54 and threonine 55 together coordinate carbamoyl phosphate. Residue lysine 82 coordinates L-aspartate. Arginine 104, histidine 134, and glutamine 137 together coordinate carbamoyl phosphate. L-aspartate-binding residues include arginine 177 and arginine 232. Carbamoyl phosphate-binding residues include glycine 277 and proline 278.

The protein belongs to the aspartate/ornithine carbamoyltransferase superfamily. ATCase family. As to quaternary structure, heterododecamer (2C3:3R2) of six catalytic PyrB chains organized as two trimers (C3), and six regulatory PyrI chains organized as three dimers (R2).

It catalyses the reaction carbamoyl phosphate + L-aspartate = N-carbamoyl-L-aspartate + phosphate + H(+). The protein operates within pyrimidine metabolism; UMP biosynthesis via de novo pathway; (S)-dihydroorotate from bicarbonate: step 2/3. Functionally, catalyzes the condensation of carbamoyl phosphate and aspartate to form carbamoyl aspartate and inorganic phosphate, the committed step in the de novo pyrimidine nucleotide biosynthesis pathway. In Paenarthrobacter aurescens (strain TC1), this protein is Aspartate carbamoyltransferase catalytic subunit.